The chain runs to 212 residues: Probable 2-dehydro-3-deoxy-6-phosphogalactonate aldolase (212 aa).

Arginine 18 contacts 2-dehydro-3-deoxy-6-phospho-D-galactonate. Glutamate 41 acts as the Proton donor/acceptor in catalysis. Threonine 70, lysine 130, glycine 160, glycine 180, and serine 181 together coordinate 2-dehydro-3-deoxy-6-phospho-D-galactonate. Lysine 130 (schiff-base intermediate with substrate) is an active-site residue.

The protein belongs to the KHG/KDPG aldolase family. As to quaternary structure, homotrimer.

It carries out the reaction 2-dehydro-3-deoxy-6-phospho-D-galactonate = D-glyceraldehyde 3-phosphate + pyruvate. It functions in the pathway carbohydrate acid metabolism; D-galactonate degradation; D-glyceraldehyde 3-phosphate and pyruvate from D-galactonate: step 3/3. Involved in the degradation of galactose via the DeLey-Doudoroff pathway. Catalyzes the reversible, stereospecific retro-aldol cleavage of 2-keto-3-deoxy-6-phosphogalactonate (KDPGal) to pyruvate and D-glyceraldehyde-3-phosphate. This Rhizobium meliloti (strain 1021) (Ensifer meliloti) protein is Probable 2-dehydro-3-deoxy-6-phosphogalactonate aldolase (dgoA).